Here is a 355-residue protein sequence, read N- to C-terminus: MLKVESNWAQACDTCRSAACTVYCRADSAYLCSSCDAQVHAANRLASRHERVRVCQSCERAPAAFFCKADAASLCTTCDSEIHSANPLARRHQRVPILPISEYSYSSTATNHSCETTVTDPENRLVLGQEEEDEDEAEAASWLLPNSGKNSGNNNGFSIGDEFLNLVDYSSSDKQFTDQSNQYQLDCNVPQRSYGEDGVVPLQIEVSKGMYQEQQNFQLSINCGSWGALRSSNGSLSHMVNVSSMDLGVVPESTTSDATVSNPRSPKAVTDQPPYPPAQMLSPRDREARVLRYREKKKMRKFEKTIRYASRKAYAEKRPRIKGRFAKKKDVDEEANQAFSTMITFDTGYGIVPSF.

Positions 12, 15, 35, 40, 55, 58, 78, and 83 each coordinate Zn(2+). A B box-type 1; atypical zinc finger spans residues cysteine 12 to valine 54. The B box-type 2; atypical zinc finger occupies cysteine 55–isoleucine 97. Over residues glutamate 252–arginine 264 the composition is skewed to polar residues. Residues glutamate 252–leucine 281 form a disordered region. In terms of domain architecture, CCT spans arginine 286 to lysine 328.

The protein belongs to the CONSTANS family. As to expression, highly expressed in leaves and at lower levels in stems, flowers and siliques. Not detected in roots.

It is found in the nucleus. Its function is as follows. Putative transcription factor that may be involved in the light input to the circadian clock but does not affect flowering time. This Arabidopsis thaliana (Mouse-ear cress) protein is Zinc finger protein CONSTANS-LIKE 1 (COL1).